Reading from the N-terminus, the 656-residue chain is Phosphatidylinositol 4,5-bisphosphate-binding protein SLM2 (656 aa).

Positions 445–555 constitute a PH domain; sequence FEVKSGFLEK…WFGNIKALSS (111 aa). The tract at residues 577 to 605 is disordered; the sequence is AKSNENTTESVTPQVTNEQHTRYDDVSSS. The span at 580–594 shows a compositional bias: polar residues; that stretch reads NENTTESVTPQVTNE. Position 626 is a phosphoserine (Ser626). Residues 640–645 carry the PXIXIT-like, required for interaction with CNA1 and CNA2, and calcineurin-dependent dephosphorylation motif; that stretch reads PEFYIE. Phosphoserine is present on residues Ser649 and Ser653.

In terms of assembly, heterodimer of SLM1-SLM2. Binds phosphatidylinositol 4,5-bisphosphate, which is required for function. Interacts with the TORC2 subunits AVO2, BIT61 and TOR2. Interacts with the calcineurin catalytic subunits CNA1 and CNA2.

The protein localises to the cell membrane. Together with SLM1, effector of the TORC2- and calcineurin-signaling pathways. Phosphorylated and activated by TORC2 under favorable growth conditions. Mediates actin polarization via inhibition of calcineurin-dependent transcription. Upon nutrient limitation or environmental stress, gets dephosphorylated by calcineurin, inhibiting interaction with TORC2, thereby antagonizing TORC2 signaling and mediating calcineurin-dependent actin depolarization. Also functions in heat-induced, calcineurin-mediated uracil permease (FUR4) endocytosis. The polypeptide is Phosphatidylinositol 4,5-bisphosphate-binding protein SLM2 (SLM2) (Saccharomyces cerevisiae (strain ATCC 204508 / S288c) (Baker's yeast)).